The chain runs to 739 residues: DNA ligase (739 aa).

Position 34 to 38 (34 to 38 (DADYD)) interacts with NAD(+). Residues 49–59 (ARFPHLKRPDS) are compositionally biased toward basic and acidic residues. The tract at residues 49–70 (ARFPHLKRPDSPSEQVGARPGE) is disordered. NAD(+) contacts are provided by residues 83 to 84 (SL) and glutamate 117. The active-site N6-AMP-lysine intermediate is lysine 119. Residues arginine 140, glutamate 175, lysine 291, and lysine 315 each contribute to the NAD(+) site. Residues cysteine 420, cysteine 423, cysteine 438, and cysteine 444 each coordinate Zn(2+). The 80-residue stretch at 660 to 739 (ARDSPVAGKT…DGWLKLIEGL (80 aa)) folds into the BRCT domain.

The protein belongs to the NAD-dependent DNA ligase family. LigA subfamily. Mg(2+) is required as a cofactor. Mn(2+) serves as cofactor.

It catalyses the reaction NAD(+) + (deoxyribonucleotide)n-3'-hydroxyl + 5'-phospho-(deoxyribonucleotide)m = (deoxyribonucleotide)n+m + AMP + beta-nicotinamide D-nucleotide.. In terms of biological role, DNA ligase that catalyzes the formation of phosphodiester linkages between 5'-phosphoryl and 3'-hydroxyl groups in double-stranded DNA using NAD as a coenzyme and as the energy source for the reaction. It is essential for DNA replication and repair of damaged DNA. The chain is DNA ligase from Ruegeria pomeroyi (strain ATCC 700808 / DSM 15171 / DSS-3) (Silicibacter pomeroyi).